Here is a 156-residue protein sequence, read N- to C-terminus: 3-hydroxyacyl-[acyl-carrier-protein] dehydratase FabZ (156 aa).

His-57 is an active-site residue.

Belongs to the thioester dehydratase family. FabZ subfamily.

Its subcellular location is the cytoplasm. The catalysed reaction is a (3R)-hydroxyacyl-[ACP] = a (2E)-enoyl-[ACP] + H2O. Involved in unsaturated fatty acids biosynthesis. Catalyzes the dehydration of short chain beta-hydroxyacyl-ACPs and long chain saturated and unsaturated beta-hydroxyacyl-ACPs. The sequence is that of 3-hydroxyacyl-[acyl-carrier-protein] dehydratase FabZ from Anaeromyxobacter sp. (strain K).